A 356-amino-acid chain; its full sequence is Gluconolactonase (356 aa).

The segment at residues 1–35 (MTTGRMSRRECLSAAVMVPIAAMTATATITGSAQA) is a signal peptide (tat-type signal).

Homodimer. Predicted to be exported by the Tat system. The position of the signal peptide cleavage has been experimentally proven.

It is found in the periplasm. It catalyses the reaction D-glucono-1,5-lactone + H2O = D-gluconate + H(+). It functions in the pathway carbohydrate acid metabolism; D-gluconate biosynthesis; D-gluconate from D-glucono-1,5-lactone: step 1/1. In terms of biological role, hydrolyzes the gluconolactone formed by glucose-fructose oxidoreductase, and that formed in aerobic conditions by the glucose dehydrogenase present. This Zymomonas mobilis subsp. mobilis (strain ATCC 31821 / ZM4 / CP4) protein is Gluconolactonase (gnl).